A 541-amino-acid chain; its full sequence is Chaperonin GroEL 2 (541 aa).

ATP-binding positions include 29–32 and 86–90; these read TLGP and DGTTT. Lys-132 is covalently cross-linked (Isoglutamyl lysine isopeptide (Lys-Gln) (interchain with Q-Cter in protein Pup)). ATP-binding positions include Gly-413, 476-478, and Asp-492; that span reads NAA.

The protein belongs to the chaperonin (HSP60) family. In terms of assembly, forms a cylinder of 14 subunits composed of two heptameric rings stacked back-to-back. Interacts with the co-chaperonin GroES.

Its subcellular location is the secreted. It localises to the capsule. The protein resides in the cell surface. The protein localises to the cell wall. It catalyses the reaction ATP + H2O + a folded polypeptide = ADP + phosphate + an unfolded polypeptide.. Functionally, together with its co-chaperonin GroES, plays an essential role in assisting protein folding. The GroEL-GroES system forms a nano-cage that allows encapsulation of the non-native substrate proteins and provides a physical environment optimized to promote and accelerate protein folding. This Mycolicibacterium smegmatis (strain ATCC 700084 / mc(2)155) (Mycobacterium smegmatis) protein is Chaperonin GroEL 2.